The following is a 206-amino-acid chain: Ribosomal RNA small subunit methyltransferase G (206 aa).

S-adenosyl-L-methionine contacts are provided by residues glycine 73, leucine 78, 124–125, and arginine 139; that span reads VE.

This sequence belongs to the methyltransferase superfamily. RNA methyltransferase RsmG family.

It is found in the cytoplasm. It carries out the reaction guanosine(527) in 16S rRNA + S-adenosyl-L-methionine = N(7)-methylguanosine(527) in 16S rRNA + S-adenosyl-L-homocysteine. Specifically methylates the N7 position of guanine in position 527 of 16S rRNA. The protein is Ribosomal RNA small subunit methyltransferase G of Photobacterium profundum (strain SS9).